A 225-amino-acid polypeptide reads, in one-letter code: Helicostatins (225 aa).

Positions 1–18 (MLYSSLPVCFLVLGAALC) are cleaved as a signal peptide. The propeptide occupies 19–48 (APERMQNEAEPHDLQPHEAEPHSDHVAPLA). 3 positions are modified to leucine amide: leucine 58, leucine 79, and leucine 90. The propeptide occupies 94–127 (SVDEDQSNDEQQLTTSDLDQAALAELFDQYDDAE). Leucine 137 bears the Leucine amide mark. Positions 141-149 (FADDETSEE) are excised as a propeptide. 5 positions are modified to leucine amide: leucine 159, leucine 170, leucine 181, leucine 192, and leucine 206. The interval 205–225 (GLGKRSGDDVSADDSDNYFDV) is disordered. The propeptide occupies 210-225 (SGDDVSADDSDNYFDV). Over residues 214-225 (VSADDSDNYFDV) the composition is skewed to acidic residues.

It belongs to the allatostatin family. In terms of tissue distribution, highly expressed in the CNS and gut of larvae. Also expressed in the cells of the larval brain and ventral nerve cord and in endocrine cells of the midgut.

It is found in the secreted. In terms of biological role, may act as a neurotransmitter or neuromodulator. This Helicoverpa armigera (Cotton bollworm) protein is Helicostatins.